Here is a 358-residue protein sequence, read N- to C-terminus: WD repeat domain phosphoinositide-interacting protein 4 (358 aa).

2 WD repeats span residues Ala-2–His-40 and Ala-188–Glu-228. The short motif at Leu-229–Gly-232 is the L/FRRG motif element. One copy of the WD 3 repeat lies at Thr-233–Arg-272.

It belongs to the WD repeat PROPPIN family.

Its subcellular location is the preautophagosomal structure. Functionally, component of the autophagy machinery that controls the major intracellular degradation process by which cytoplasmic materials are packaged into autophagosomes and delivered to lysosomes for degradation. Binds phosphatidylinositol 3-phosphate (PtdIns3P). The protein is WD repeat domain phosphoinositide-interacting protein 4 (wdr45) of Danio rerio (Zebrafish).